The primary structure comprises 242 residues: N-acetylmuramate alpha-1-phosphate uridylyltransferase (242 aa).

UTP is bound by residues 16–18 and Lys-28; that span reads GTR. Substrate is bound at residue Asn-113. Asp-115 contributes to the Mg(2+) binding site. A substrate-binding site is contributed by Asp-158.

It belongs to the nucleotidyltransferase MurU family. As to quaternary structure, monomer. Mg(2+) is required as a cofactor.

The catalysed reaction is N-acetyl-alpha-D-muramate 1-phosphate + UDP + H(+) = UDP-N-acetyl-alpha-D-muramate + phosphate. The protein operates within cell wall biogenesis; peptidoglycan recycling. In terms of biological role, catalyzes the formation of UDP-N-acetylmuramate (UDP-MurNAc), a crucial precursor of the bacterial peptidoglycan cell wall, from UTP and MurNAc-alpha-1P. Is likely involved in peptidoglycan recycling as part of a cell wall recycling pathway that bypasses de novo biosynthesis of the peptidoglycan precursor UDP-MurNAc. Is able to complement the fosfomycin sensitivity phenotype of a P.putida mutant lacking murU. This chain is N-acetylmuramate alpha-1-phosphate uridylyltransferase, found in Caulobacter vibrioides (strain ATCC 19089 / CIP 103742 / CB 15) (Caulobacter crescentus).